A 334-amino-acid polypeptide reads, in one-letter code: N-acetylmuramate/N-acetylglucosamine kinase (334 aa).

The protein belongs to the kinase AmgK family.

It catalyses the reaction N-acetyl-D-muramate + ATP = N-acetyl-alpha-D-muramate 1-phosphate + ADP + H(+). The catalysed reaction is N-acetyl-D-glucosamine + ATP = N-acetyl-alpha-D-glucosamine 1-phosphate + ADP + H(+). It functions in the pathway cell wall biogenesis; peptidoglycan recycling. Functionally, sugar kinase that catalyzes the ATP-dependent phosphorylation of N-acetylmuramate (MurNAc) and N-acetylglucosamine (GlcNAc) at its C1 hydroxyl group, leading to MurNAc alpha-1P and GlcNAc alpha-1P, respectively. Is likely involved in peptidoglycan recycling as part of a cell wall recycling pathway that bypasses de novo biosynthesis of the peptidoglycan precursor UDP-MurNAc. Is able to complement the fosfomycin sensitivity phenotype of a P.putida mutant lacking amgK. The sequence is that of N-acetylmuramate/N-acetylglucosamine kinase from Neisseria meningitidis serogroup B (strain ATCC BAA-335 / MC58).